The primary structure comprises 931 residues: Up-regulator of cell proliferation (931 aa).

The residue at position 3 (Ser-3) is a Phosphoserine. In terms of domain architecture, VLIG-type G spans 689–929 (RSRLVVLSTV…NIQQLIELVR (241 aa)).

It belongs to the TRAFAC class dynamin-like GTPase superfamily. Very large inducible GTPase (VLIG) family. Strongly expressed in hepatitis B virus-infected liver and in HCC cells. Also highly expressed in well-differentiated gastric cancer tissues and various gastric cancer cell lines.

The protein localises to the cytoplasm. The protein resides in the nucleus. Functionally, may be involved in cell cycle progression through the regulation of cyclin D1 expression. May participate in the development of hepatocellular carcinoma (HCC) by promoting hepatocellular growth and survival. May play an important role in development of gastric cancer. The sequence is that of Up-regulator of cell proliferation (URGCP) from Homo sapiens (Human).